The chain runs to 313 residues: tRNA dimethylallyltransferase (313 aa).

An ATP-binding site is contributed by 12–19 (GPTASGKS). 14-19 (TASGKS) is a binding site for substrate. Interaction with substrate tRNA stretches follow at residues 37–40 (DSMQ) and 161–165 (QRSIR).

It belongs to the IPP transferase family. In terms of assembly, monomer. Requires Mg(2+) as cofactor.

It catalyses the reaction adenosine(37) in tRNA + dimethylallyl diphosphate = N(6)-dimethylallyladenosine(37) in tRNA + diphosphate. In terms of biological role, catalyzes the transfer of a dimethylallyl group onto the adenine at position 37 in tRNAs that read codons beginning with uridine, leading to the formation of N6-(dimethylallyl)adenosine (i(6)A). The polypeptide is tRNA dimethylallyltransferase (Pelagibacter ubique (strain HTCC1062)).